Reading from the N-terminus, the 208-residue chain is Uracil phosphoribosyltransferase (208 aa).

5-phospho-alpha-D-ribose 1-diphosphate is bound by residues Arg78, Arg103, and 130–138 (DPMLATGGS). Uracil contacts are provided by residues Ile193 and 198 to 200 (GDA). Asp199 lines the 5-phospho-alpha-D-ribose 1-diphosphate pocket.

This sequence belongs to the UPRTase family. The cofactor is Mg(2+).

It carries out the reaction UMP + diphosphate = 5-phospho-alpha-D-ribose 1-diphosphate + uracil. Its pathway is pyrimidine metabolism; UMP biosynthesis via salvage pathway; UMP from uracil: step 1/1. Allosterically activated by GTP. In terms of biological role, catalyzes the conversion of uracil and 5-phospho-alpha-D-ribose 1-diphosphate (PRPP) to UMP and diphosphate. This is Uracil phosphoribosyltransferase from Pasteurella multocida (strain Pm70).